The chain runs to 146 residues: Hemoglobin subunit beta (146 aa).

The Globin domain occupies 2-146 (QWTAEEKQLI…VAHALARKYH (145 aa)). Residues His-63 and His-92 each contribute to the heme b site.

Belongs to the globin family. Heterotetramer of two alpha chains and two beta chains. In terms of tissue distribution, red blood cells.

Functionally, involved in oxygen transport from the lung to the various peripheral tissues. This chain is Hemoglobin subunit beta (HBB), found in Turdus merula (Common blackbird).